Here is a 372-residue protein sequence, read N- to C-terminus: Methylthioribose-1-phosphate isomerase (372 aa).

D252 (proton donor) is an active-site residue.

This sequence belongs to the eIF-2B alpha/beta/delta subunits family. MtnA subfamily.

It is found in the cytoplasm. The protein resides in the nucleus. The catalysed reaction is 5-(methylsulfanyl)-alpha-D-ribose 1-phosphate = 5-(methylsulfanyl)-D-ribulose 1-phosphate. Its pathway is amino-acid biosynthesis; L-methionine biosynthesis via salvage pathway; L-methionine from S-methyl-5-thio-alpha-D-ribose 1-phosphate: step 1/6. Catalyzes the interconversion of methylthioribose-1-phosphate (MTR-1-P) into methylthioribulose-1-phosphate (MTRu-1-P). The polypeptide is Methylthioribose-1-phosphate isomerase (Yarrowia lipolytica (strain CLIB 122 / E 150) (Yeast)).